A 379-amino-acid polypeptide reads, in one-letter code: Cytochrome b (379 aa).

The next 4 membrane-spanning stretches (helical) occupy residues 33–53 (FGSL…FLAM), 77–98 (WLIR…FIHV), 113–133 (WNIG…GYVL), and 178–198 (FFAF…VHLL). Residues H83 and H97 each contribute to the heme b site. Heme b is bound by residues H182 and H196. An a ubiquinone-binding site is contributed by H201. The next 4 helical transmembrane spans lie at 226–246 (TKDL…TLFF), 288–308 (LGGV…PLLN), 320–340 (ITQT…WIGG), and 347–367 (FTTI…ILIP).

This sequence belongs to the cytochrome b family. In terms of assembly, the cytochrome bc1 complex contains 11 subunits: 3 respiratory subunits (MT-CYB, CYC1 and UQCRFS1), 2 core proteins (UQCRC1 and UQCRC2) and 6 low-molecular weight proteins (UQCRH/QCR6, UQCRB/QCR7, UQCRQ/QCR8, UQCR10/QCR9, UQCR11/QCR10 and a cleavage product of UQCRFS1). This cytochrome bc1 complex then forms a dimer. Heme b serves as cofactor.

It localises to the mitochondrion inner membrane. Its function is as follows. Component of the ubiquinol-cytochrome c reductase complex (complex III or cytochrome b-c1 complex) that is part of the mitochondrial respiratory chain. The b-c1 complex mediates electron transfer from ubiquinol to cytochrome c. Contributes to the generation of a proton gradient across the mitochondrial membrane that is then used for ATP synthesis. This is Cytochrome b (MT-CYB) from Akodon azarae (Azara's grass mouse).